Consider the following 537-residue polypeptide: Beta-hexosaminidase subunit beta (537 aa).

Residues 1–23 form the signal peptide; sequence MPGSPRRAPGLLLQALVAMVSLA. Asn62 is a glycosylation site (N-linked (GlcNAc...) asparagine). Cys69 and Cys115 are oxidised to a cystine. N-linked (GlcNAc...) asparagine glycans are attached at residues Asn168 and Asn305. Cystine bridges form between Cys287-Cys338 and Cys512-Cys529. Catalysis depends on Glu333, which acts as the Proton donor.

It belongs to the glycosyl hydrolase 20 family. In terms of assembly, there are 3 forms of beta-hexosaminidase: hexosaminidase A is a heterodimer composed of one subunit alpha and one subunit beta (chain A and B); hexosaminidase B is a homodimer of two beta subunits (two chains A and B); hexosaminidase S is a homodimer of two alpha subunits. The composition of the dimer (isozyme A versus isozyme S) has a significant effect on the substrate specificity of the alpha subunit active site.

It is found in the lysosome. The protein localises to the cytoplasmic vesicle. The protein resides in the secretory vesicle. Its subcellular location is the cortical granule. It catalyses the reaction Hydrolysis of terminal non-reducing N-acetyl-D-hexosamine residues in N-acetyl-beta-D-hexosaminides.. The enzyme catalyses N-acetyl-beta-D-galactosaminyl-(1-&gt;4)-beta-D-3-sulfogalactosyl-(1-&gt;4)-beta-D-glucosyl-(1&lt;-&gt;1')-ceramide + H2O = a beta-D-3-sulfogalactosyl-(1-&gt;4)-beta-D-glucosyl-(1&lt;-&gt;1')-ceramide + N-acetyl-beta-D-galactosamine. The catalysed reaction is a ganglioside GM2 (d18:1(4E)) + H2O = a ganglioside GM3 (d18:1(4E)) + N-acetyl-beta-D-galactosamine. It carries out the reaction a ganglioside GM2 + H2O = a ganglioside GM3 + N-acetyl-beta-D-galactosamine. It catalyses the reaction beta-D-GalNAc-(1-&gt;4)-alpha-L-IdoA-(1-&gt;3)-beta-D-GalNAc-4-sulfate-(1-&gt;4)-alpha-L-IdoA-(1-&gt;3)-D-GalNAc-4-sulfate + H2O = alpha-L-IdoA-(1-&gt;3)-beta-D-GalNAc-4-sulfate-(1-&gt;4)-alpha-L-IdoA-(1-&gt;3)-D-GalNAc-4-sulfate + N-acetyl-D-galactosamine. The enzyme catalyses N-acetyl-beta-D-6-sulfogalactosaminyl-(1-&gt;4)-alpha-L-iduronyl-(1-&gt;3)-N-acetyl-D-6-sulfogalactosamine + H2O = alpha-L-iduronyl-(1-&gt;3)-N-acetyl-D-6-sulfogalactosamine + N-acetyl-D-6-sulfogalactosamine. Addition of GM2A stimulates the hydrolysis of sulfated glycosphingolipid SM2 and the ganglioside GM2. Hydrolyzes the non-reducing end N-acetyl-D-hexosamine and/or sulfated N-acetyl-D-hexosamine of glycoconjugates, such as the oligosaccharide moieties from proteins and neutral glycolipids, or from certain mucopolysaccharides. The isozyme B does not hydrolyze each of these substrates, however hydrolyzes efficiently neutral oligosaccharide. Only the isozyme A is responsible for the degradation of GM2 gangliosides in the presence of GM2A. During fertilization is responsible, at least in part, for the zona block to polyspermy. Present in the cortical granules of non-activated oocytes, is exocytosed during the cortical reaction in response to oocyte activation and inactivates the sperm galactosyltransferase-binding site, accounting for the block in sperm binding to the zona pellucida. This chain is Beta-hexosaminidase subunit beta, found in Rattus norvegicus (Rat).